The chain runs to 247 residues: Probable transcriptional regulatory protein ABO_0750 (247 aa).

Belongs to the TACO1 family.

Its subcellular location is the cytoplasm. This chain is Probable transcriptional regulatory protein ABO_0750, found in Alcanivorax borkumensis (strain ATCC 700651 / DSM 11573 / NCIMB 13689 / SK2).